The chain runs to 429 residues: MSGGVYGGDEVGALVFDIGSYTVRAGYAGEDCPKVDFPTAIGVVLERDDGSTMMEIDGDKGKQGGPTYYIDTNALRVPRENMEAISPLKNGMVEDWDSFQAILDHTYKMHVKSEASLHPVLMSEAPWNTRAKREKLTELMFEHYSIPAFFLCKTAVLTAFANGRSTGLILDSGATHTTAIPVHDGYVLQQGIVKSPLAGDFITMQCRELFQEMNIELIPPYMIASKEAVREGSPANWKRKEKLPQVTRSWHNYMCNCVIQDFQASVLQVSDSTYDEQVAAQMPTVHYEFPNGYNCDFGAERLKIPEGLFDPSNVKGLSGNTMLGVSHVVTTSVGMCDIDIRPGLYGSVIVAGGNTLIQSFTDRLNRELSQKTPPSMRLKLIANNTTVERRFSSWIGGSILASLGTFQQMWISKQEYEEGGKQCVERKCP.

Ser-2 carries the post-translational modification N-acetylserine. Residue Lys-62 forms a Glycyl lysine isopeptide (Lys-Gly) (interchain with G-Cter in SUMO2) linkage. Phosphoserine occurs at positions 86 and 233.

The protein belongs to the actin family. As to quaternary structure, component of numerous complexes with chromatin remodeling and histone acetyltransferase activity. Component of the NuA4 histone acetyltransferase complex which contains the catalytic subunit KAT5/TIP60 and the subunits EP400, TRRAP/PAF400, BRD8/SMAP, EPC1, DMAP1/DNMAP1, RUVBL1/TIP49, RUVBL2, ING3, actin, ACTL6A/BAF53A, MORF4L1/MRG15, MORF4L2/MRGX, MRGBP, YEATS4/GAS41, VPS72/YL1 and MEAF6. The NuA4 complex interacts with MYC and the adenovirus E1A protein. Component of a NuA4-related complex which contains EP400, TRRAP/PAF400, SRCAP, BRD8/SMAP, EPC1, DMAP1/DNMAP1, RUVBL1/TIP49, RUVBL2, actin, ACTL6A/BAF53A, VPS72 and YEATS4/GAS41. Component of the multiprotein chromatin-remodeling complexes SWI/SNF: SWI/SNF-A (BAF), SWI/SNF-B (PBAF) and related complexes. The canonical complex contains a catalytic subunit (either SMARCA4/BRG1/BAF190A or SMARCA2/BRM/BAF190B) and at least SMARCE1, ACTL6A/BAF53, SMARCC1/BAF155, SMARCC2/BAF170, and SMARCB1/SNF5/BAF47. Other subunits specific to each of the complexes may also be present permitting several possible combinations developmentally and tissue specific. Component of the BAF complex, which includes at least actin (ACTB), ARID1A/BAF250A, ARID1B/BAF250B, SMARCA2/BRM, SMARCA4/BRG1/BAF190A, ACTL6A/BAF53, ACTL6B/BAF53B, SMARCE1/BAF57, SMARCC1/BAF155, SMARCC2/BAF170, SMARCB1/SNF5/INI1, and one or more SMARCD1/BAF60A, SMARCD2/BAF60B, or SMARCD3/BAF60C. In muscle cells, the BAF complex also contains DPF3. Component of the BAF53 complex, at least composed of ACTL6A/BAF53A, RUVBL1/TIP49, SMARCA2/BRM/BAF190B and TRRAP/PAF400, and which may also include a HAT activity related to, but distinct from, that of KAT5. Component of neural progenitors-specific chromatin remodeling complex (npBAF complex) composed of at least, ARID1A/BAF250A or ARID1B/BAF250B, SMARCD1/BAF60A, SMARCD3/BAF60C, SMARCA2/BRM/BAF190B, SMARCA4/BRG1/BAF190A, SMARCB1/BAF47, SMARCC1/BAF155, SMARCE1/BAF57, SMARCC2/BAF170, PHF10/BAF45A, ACTL6A/BAF53A and actin. Component of SWI/SNF (GBAF) subcomplex, which includes at least BICRA or BICRAL (mutually exclusive), BRD9, SS18, SMARCA2/BRM, SMARCA4/BRG1/BAF190A, ACTL6A/BAF53, SMARCC1/BAF155, and SMARCD1/BAF60A. May be a component of the SWI/SNF-B (PBAF) chromatin remodeling complex, at least composed of SMARCA4/BRG1, SMARCB1/BAF47/SNF5, ACTL6A/BAF53A or ACTL6B/BAF53B, SMARCE1/BAF57, SMARCD1/BAF60A, SMARCD2/BAF60B, perhaps SMARCD3/BAF60C, SMARCC1/BAF155, SMARCC2/BAF170, PBRM1/BAF180, ARID2/BAF200 and actin. Interacts with SMARCA4/BRG1/BAF190A. Interacts with PHF10/BAF45A. Component of the chromatin remodeling INO80 complex; specifically part of a complex module associated with the DBINO domain of INO80. Interacts with DPF2. Widely expressed. Expressed selectively in neural stem and progenitor cells (at protein level).

The protein localises to the nucleus. In terms of biological role, involved in transcriptional activation and repression of select genes by chromatin remodeling (alteration of DNA-nucleosome topology). Component of SWI/SNF chromatin remodeling complexes that carry out key enzymatic activities, changing chromatin structure by altering DNA-histone contacts within a nucleosome in an ATP-dependent manner. Required for maximal ATPase activity of SMARCA4/BRG1/BAF190A and for association of the SMARCA4/BRG1/BAF190A containing remodeling complex BAF with chromatin/nuclear matrix. Belongs to the neural progenitors-specific chromatin remodeling complex (npBAF complex) and is required for the proliferation of neural progenitors. During neural development a switch from a stem/progenitor to a postmitotic chromatin remodeling mechanism occurs as neurons exit the cell cycle and become committed to their adult state. The transition from proliferating neural stem/progenitor cells to postmitotic neurons requires a switch in subunit composition of the npBAF and nBAF complexes. As neural progenitors exit mitosis and differentiate into neurons, npBAF complexes which contain ACTL6A/BAF53A and PHF10/BAF45A, are exchanged for homologous alternative ACTL6B/BAF53B and DPF1/BAF45B or DPF3/BAF45C subunits in neuron-specific complexes (nBAF). The npBAF complex is essential for the self-renewal/proliferative capacity of the multipotent neural stem cells. The nBAF complex along with CREST plays a role regulating the activity of genes essential for dendrite growth. Component of the NuA4 histone acetyltransferase (HAT) complex which is involved in transcriptional activation of select genes principally by acetylation of nucleosomal histones H4 and H2A. This modification may both alter nucleosome - DNA interactions and promote interaction of the modified histones with other proteins which positively regulate transcription. This complex may be required for the activation of transcriptional programs associated with oncogene and proto-oncogene mediated growth induction, tumor suppressor mediated growth arrest and replicative senescence, apoptosis, and DNA repair. NuA4 may also play a direct role in DNA repair when recruited to sites of DNA damage. Putative core component of the chromatin remodeling INO80 complex which is involved in transcriptional regulation, DNA replication and probably DNA repair. The sequence is that of Actin-like protein 6A (Actl6a) from Mus musculus (Mouse).